The following is a 120-amino-acid chain: Protein GP96 (120 aa).

This sequence belongs to the herpesviridae UL96 family.

This is Protein GP96 from Cavia porcellus (Guinea pig).